The sequence spans 497 residues: Squalene monooxygenase (497 aa).

Residues 29–30 (VV), 49–50 (ER), R57, R159, V175, D336, and M349 contribute to the FAD site. Transmembrane regions (helical) follow at residues 434 to 454 (FLSGVLPSPYLLTKVFFTVAL) and 467 to 487 (LGFLLAIYEGFAIIFTAAKVF).

Belongs to the squalene monooxygenase family. FAD serves as cofactor.

Its subcellular location is the microsome membrane. It is found in the endoplasmic reticulum membrane. It carries out the reaction squalene + reduced [NADPH--hemoprotein reductase] + O2 = (S)-2,3-epoxysqualene + oxidized [NADPH--hemoprotein reductase] + H2O + H(+). It participates in terpene metabolism; lanosterol biosynthesis; lanosterol from farnesyl diphosphate: step 2/3. Its function is as follows. Catalyzes the stereospecific oxidation of squalene to (S)-2,3-epoxysqualene, and is considered to be a rate-limiting enzyme in steroid biosynthesis. This Eremothecium gossypii (strain ATCC 10895 / CBS 109.51 / FGSC 9923 / NRRL Y-1056) (Yeast) protein is Squalene monooxygenase (ERG1).